The following is a 111-amino-acid chain: T cell receptor beta variable 30 (111 aa).

Positions 1 to 18 (MLCSLLALLLGTFFGVRS) are cleaved as a signal peptide. Residues 19 to 111 (QTIHQWPATL…DSGFYLCAWS (93 aa)) enclose the Ig-like domain. Cysteine 40 and cysteine 108 are oxidised to a cystine. An N-linked (GlcNAc...) asparagine glycan is attached at asparagine 80.

As to quaternary structure, alpha-beta TR is a heterodimer composed of an alpha and beta chain; disulfide-linked. The alpha-beta TR is associated with the transmembrane signaling CD3 coreceptor proteins to form the TR-CD3 (TcR or TCR). The assembly of alpha-beta TR heterodimers with CD3 occurs in the endoplasmic reticulum where a single alpha-beta TR heterodimer associates with one CD3D-CD3E heterodimer, one CD3G-CD3E heterodimer and one CD247 homodimer forming a stable octameric structure. CD3D-CD3E and CD3G-CD3E heterodimers preferentially associate with TR alpha and TR beta chains, respectively. The association of the CD247 homodimer is the last step of TcR assembly in the endoplasmic reticulum and is required for transport to the cell surface.

It is found in the cell membrane. Its function is as follows. V region of the variable domain of T cell receptor (TR) beta chain that participates in the antigen recognition. Alpha-beta T cell receptors are antigen specific receptors which are essential to the immune response and are present on the cell surface of T lymphocytes. Recognize peptide-major histocompatibility (MH) (pMH) complexes that are displayed by antigen presenting cells (APC), a prerequisite for efficient T cell adaptive immunity against pathogens. Binding of alpha-beta TR to pMH complex initiates TR-CD3 clustering on the cell surface and intracellular activation of LCK that phosphorylates the ITAM motifs of CD3G, CD3D, CD3E and CD247 enabling the recruitment of ZAP70. In turn ZAP70 phosphorylates LAT, which recruits numerous signaling molecules to form the LAT signalosome. The LAT signalosome propagates signal branching to three major signaling pathways, the calcium, the mitogen-activated protein kinase (MAPK) kinase and the nuclear factor NF-kappa-B (NF-kB) pathways, leading to the mobilization of transcription factors that are critical for gene expression and essential for T cell growth and differentiation. The T cell repertoire is generated in the thymus, by V-(D)-J rearrangement. This repertoire is then shaped by intrathymic selection events to generate a peripheral T cell pool of self-MH restricted, non-autoaggressive T cells. Post-thymic interaction of alpha-beta TR with the pMH complexes shapes TR structural and functional avidity. The chain is T cell receptor beta variable 30 from Homo sapiens (Human).